A 353-amino-acid chain; its full sequence is Serine proteinase inhibitor 1 (353 aa).

This sequence belongs to the serpin family. Poxviruses subfamily.

The protein resides in the host cytoplasm. Plays a role in mediating viral host range. May act to inhibit a caspase independent form of apoptosis to allow efficient virus replication in infected cells. This chain is Serine proteinase inhibitor 1 (OPG208), found in Vaccinia virus (strain Western Reserve) (VACV).